A 586-amino-acid chain; its full sequence is Phosphatidylinositol-3-phosphatase SAC1-B (586 aa).

Topologically, residues 1-519 are cytoplasmic; the sequence is MASTYNSFNL…TPLHEPKDWK (519 aa). One can recognise an SAC domain in the interval 121 to 450; the sequence is LNSVLNTDGF…ANACAKQYAG (330 aa). Positions 451-586 are essential for phosphatidylinositol-4-phosphate phosphatase activity; the sequence is TGALKTDFTR…PRLVQKEKMD (136 aa). Residues 520–540 form a helical membrane-spanning segment; it reads FLTLPIIMVVAFSMCIICLLM. The Lumenal segment spans residues 541–547; sequence AGDTWTE. Residues 548–568 form a helical membrane-spanning segment; the sequence is TLAYVLFWGSASVVTGGVILF. The Cytoplasmic portion of the chain corresponds to 569–586; it reads NGRDFVDAPRLVQKEKMD.

The protein localises to the endoplasmic reticulum membrane. The protein resides in the golgi apparatus membrane. The enzyme catalyses a 1,2-diacyl-sn-glycero-3-phospho-(1D-myo-inositol-3-phosphate) + H2O = a 1,2-diacyl-sn-glycero-3-phospho-(1D-myo-inositol) + phosphate. It carries out the reaction a 1,2-diacyl-sn-glycero-3-phospho-(1D-myo-inositol 4-phosphate) + H2O = a 1,2-diacyl-sn-glycero-3-phospho-(1D-myo-inositol) + phosphate. Functionally, phosphoinositide phosphatase which catalyzes the hydrolysis of phosphatidylinositol 4-phosphate (PtdIns(4)P), phosphatidylinositol 3-phosphate (PtdIns(3)P) and has low activity towards phosphatidylinositol-3,5-bisphosphate (PtdIns(3,5)P2). This chain is Phosphatidylinositol-3-phosphatase SAC1-B (sacm1lb), found in Danio rerio (Zebrafish).